Reading from the N-terminus, the 264-residue chain is 3-methyl-2-oxobutanoate hydroxymethyltransferase (264 aa).

Mg(2+)-binding residues include aspartate 45 and aspartate 84. Residues 45 to 46 (DS), aspartate 84, and lysine 112 contribute to the 3-methyl-2-oxobutanoate site. Glutamate 114 is a binding site for Mg(2+). The active-site Proton acceptor is the glutamate 181.

It belongs to the PanB family. As to quaternary structure, homodecamer; pentamer of dimers. It depends on Mg(2+) as a cofactor.

The protein resides in the cytoplasm. It carries out the reaction 3-methyl-2-oxobutanoate + (6R)-5,10-methylene-5,6,7,8-tetrahydrofolate + H2O = 2-dehydropantoate + (6S)-5,6,7,8-tetrahydrofolate. Its pathway is cofactor biosynthesis; (R)-pantothenate biosynthesis; (R)-pantoate from 3-methyl-2-oxobutanoate: step 1/2. Functionally, catalyzes the reversible reaction in which hydroxymethyl group from 5,10-methylenetetrahydrofolate is transferred onto alpha-ketoisovalerate to form ketopantoate. In Colwellia psychrerythraea (strain 34H / ATCC BAA-681) (Vibrio psychroerythus), this protein is 3-methyl-2-oxobutanoate hydroxymethyltransferase.